We begin with the raw amino-acid sequence, 70 residues long: SPbeta prophage-derived uncharacterized HTH-type transcriptional regulator YopO (70 aa).

In terms of domain architecture, HTH cro/C1-type spans 5–59; sequence IKQLMVKRGITIEELSRETMIDMQTLNKIIEMPDESDVTTIKLIALVLNVSIDEL. A DNA-binding region (H-T-H motif) is located at residues 16 to 35; sequence IEELSRETMIDMQTLNKIIE.

In Bacillus subtilis (strain 168), this protein is SPbeta prophage-derived uncharacterized HTH-type transcriptional regulator YopO (yopO).